We begin with the raw amino-acid sequence, 194 residues long: Cation channel sperm-associated auxiliary subunit zeta (194 aa).

Component of the CatSper complex or CatSpermasome composed of the core pore-forming members CATSPER1, CATSPER2, CATSPER3 and CATSPER4 as well as auxiliary members CATSPERB, CATSPERG2, CATSPERD, CATSPERE, CATSPERZ, C2CD6/CATSPERT, SLCO6C1, TMEM249, TMEM262 and EFCAB9. HSPA1 may be an additional auxiliary complex member. The core complex members CATSPER1, CATSPER2, CATSPER3 and CATSPER4 form a heterotetrameric channel. The auxiliary CATSPERB, CATSPERG2, CATSPERD and CATSPERE subunits form a pavilion-like structure over the pore which stabilizes the complex through interactions with CATSPER4, CATSPER3, CATSPER1 and CATSPER2 respectively. SLCO6C1 interacts with CATSPERE and TMEM262/CATSPERH interacts with CATSPERB, further stabilizing the complex. C2CD6/CATSPERT interacts at least with CATSPERD and is required for targeting the CatSper complex in the flagellar membrane. Interacts with EFCAB9; the interaction is direct, Ca(2+)-dependent and connects EFCAB9 with the CatSper complex. Dissociates from EFCAB9 at elevated pH. In terms of tissue distribution, testis-specific. Expressed in adult but not in fetal testis. Not expressed in ovary. Within testis, expression is restricted to spermatids.

It is found in the cell projection. The protein resides in the cilium. The protein localises to the flagellum membrane. Its function is as follows. Auxiliary component of the CatSper complex, a complex involved in sperm cell hyperactivation. Sperm cell hyperactivation is needed for sperm motility which is essential late in the preparation of sperm for fertilization. Required for a distribution of the CatSper complex in linear quadrilateral nanodomains along the flagellum, maximizing fertilization inside the mammalian female reproductive tract. Together with EFCAB9, associates with the CatSper channel pore and is required for the two-row structure of each single CatSper channel. This Mus musculus (Mouse) protein is Cation channel sperm-associated auxiliary subunit zeta.